A 293-amino-acid chain; its full sequence is tRNA pseudouridine synthase B (293 aa).

The active-site Nucleophile is the Asp38.

This sequence belongs to the pseudouridine synthase TruB family. Type 1 subfamily.

The catalysed reaction is uridine(55) in tRNA = pseudouridine(55) in tRNA. Functionally, responsible for synthesis of pseudouridine from uracil-55 in the psi GC loop of transfer RNAs. The polypeptide is tRNA pseudouridine synthase B (Microcystis aeruginosa (strain NIES-843 / IAM M-2473)).